The following is a 450-amino-acid chain: MAAPPLGRLVLTHLLVALFGMGSWAAVNGIWVELPVVVKELPEGWSLPSYLSVLVALGNLGLLLVTLWRRLARGKGEQVPIRVVQGLGIVGTGLLASLWNHVAPVAGKPYSVAFLTLAFVLALACCASNVTFLPFLSHLPPPFLRSFFLGQGLSALLPCVLALGQGVGRLECLHVPANRTTGPPIEVSPINFPERFSATTFFWVLTALLGTSAAAFQGLLLLLPSPTSEPTTGTGLRVETPGTEEEEEEEEASPLQEPPGQVAGIVSSPDPKAHQLFSSRSACLLGLLAITNALTNGVLPAVQSFSCLPYGRLAYHLAVVLGSCANPLACFLAMAVLCRSLAGLCGLSLLGMLLGSYLMTLAALSPCPPLVGTSAGVVLVVLSWVLCAGTFSYIKVAISSMLHSGGRPALLAAGVAIQVGSLLGAVAMFPPTSIYRVFRSGKDCVDQCGL.

5 helical membrane passes run 14–34, 47–67, 86–106, 112–132, and 147–167; these read LLVA…WVEL, LPSY…LVTL, GLGI…APVA, VAFL…NVTF, and FFLG…GQGV. N178 carries an N-linked (GlcNAc...) asparagine glycan. Residues 201–221 form a helical membrane-spanning segment; the sequence is FFWVLTALLGTSAAAFQGLLL. A compositionally biased stretch (low complexity) spans 227–236; the sequence is TSEPTTGTGL. The tract at residues 227-264 is disordered; the sequence is TSEPTTGTGLRVETPGTEEEEEEEEASPLQEPPGQVAG. The span at 242–252 shows a compositional bias: acidic residues; that stretch reads GTEEEEEEEEA. Helical transmembrane passes span 282-302, 317-337, 344-364, 369-389, and 409-429; these read ACLL…LPAV, LAVV…MAVL, LCGL…LAAL, PLVG…LCAG, and ALLA…VAMF.

The protein belongs to the riboflavin transporter family.

It is found in the cell membrane. The enzyme catalyses riboflavin(in) = riboflavin(out). Riboflavin transport is Na(+)-independent but moderately pH-sensitive. Activity is strongly inhibited by riboflavin analogs, such as lumiflavin. Weakly inhibited by flavin adenine dinucleotide (FAD) and flavin mononucleotide (FMN). In terms of biological role, plasma membrane transporter mediating the uptake by cells of the water soluble vitamin B2/riboflavin that plays a key role in biochemical oxidation-reduction reactions of the carbohydrate, lipid, and amino acid metabolism. May also act as a receptor for 4-hydroxybutyrate. This chain is Solute carrier family 52, riboflavin transporter, member 2 (Slc52a2), found in Mus musculus (Mouse).